We begin with the raw amino-acid sequence, 556 residues long: Potassium-transporting ATPase potassium-binding subunit (556 aa).

The next 10 membrane-spanning stretches (helical) occupy residues 1–21 (MTWI…GIAQ), 60–80 (SYAR…YALQ), 130–150 (GLCV…VALI), 173–193 (LRIL…GGAV), 245–265 (PQPW…FSLP), 281–301 (ILAA…AAEF), 374–394 (GLYG…LLVG), 416–436 (ILVM…VPGL), 482–502 (AALG…ILAL), and 529–549 (LIVF…LTLG).

This sequence belongs to the KdpA family. The system is composed of three essential subunits: KdpA, KdpB and KdpC.

Its subcellular location is the cell membrane. Its function is as follows. Part of the high-affinity ATP-driven potassium transport (or Kdp) system, which catalyzes the hydrolysis of ATP coupled with the electrogenic transport of potassium into the cytoplasm. This subunit binds the extracellular potassium ions and delivers the ions to the membrane domain of KdpB through an intramembrane tunnel. This chain is Potassium-transporting ATPase potassium-binding subunit, found in Cutibacterium acnes (strain DSM 16379 / KPA171202) (Propionibacterium acnes).